The primary structure comprises 314 residues: Chlorinase cctP2 (314 aa).

The span at 1-14 (MEGKTSRYQDEAHD) shows a compositional bias: basic and acidic residues. The segment at 1 to 24 (MEGKTSRYQDEAHDSAGSFNEETE) is disordered. Short sequence motifs (HXXHC) lie at residues 150–154 (HALHC) and 177–181 (HIEHC).

This sequence belongs to the ustYa family.

It participates in mycotoxin biosynthesis. Chlorinase; part of the gene cluster that mediates the biosynthesis of the mycotoxin cyclochlorotine, a hepatotoxic and carcinogenic cyclic chlorinated pentapeptide. Within the pathway, cctP2 catalyzes the formation of isocyclochlorotine via dichlorination of the Pro from the isocyclotine skeleton. The NRPS cctN initially catalyzes the condensation of L-serine (Ser), Pro, L-2-aminobutyrate (2Abu), Ser, and beta-Phe in this order to produce isocyclotine. After the dichlorination of Pro2 catalyzed by cctP2 to produce isocyclochlorotine, the cctO-mediated transacylation of isocyclochlorotine can furnish cyclochlorotine. The subsequent hydroxylation of cyclochlorotine by cctR yields hydroxycyclochlorotine as the final product. CctP1 probably acts as a phenylalanine aminomutase and provides the uncommon building block beta-Phe. Furthermore, 2Abu can be synthesized from threonine by one of the threonine dehydratases and transaminases localized outside of the cluster. The functions of the remaining proteins encoded by the cluster, cctM and cctT, have not been identified yet. This is Chlorinase cctP2 from Talaromyces islandicus (Penicillium islandicum).